Consider the following 46-residue polypeptide: Large ribosomal subunit protein bL34 (46 aa).

The segment at 25-46 (TASGRQVLRRRRAKGRYRLAVS) is disordered. A compositionally biased stretch (basic residues) spans 31-46 (VLRRRRAKGRYRLAVS).

Belongs to the bacterial ribosomal protein bL34 family.

The chain is Large ribosomal subunit protein bL34 from Synechococcus sp. (strain JA-3-3Ab) (Cyanobacteria bacterium Yellowstone A-Prime).